Reading from the N-terminus, the 806-residue chain is N-terminal kinase-like protein (806 aa).

The Protein kinase domain maps to 14–314 (FELSPEPPEG…PEDFCRHKVL (301 aa)). HEAT repeat units lie at residues 350-388 (IIPVVVKMFSSTDRAMRIRLLQQMEQFIQYLDEPTVNTQ), 389-427 (IFPHVTHGFLDTNPAIREQTVKSMLLLAPKLNEANLNVE), and 507-545 (ILPVLCGLTVDPEKSVRDQAFKTIRSFLSKLESVSEDPT). Disordered regions lie at residues 586–642 (RAHP…TADR) and 663–806 (DDWS…RKLD). Residues 601–611 (RPVPEGNPAPA) show a composition bias toward pro residues. Serine 752 carries the phosphoserine modification. Positions 752–762 (SWGEDNWEGLE) are enriched in acidic residues. A coiled-coil region spans residues 755 to 795 (EDNWEGLEAESRQVKAELARKKREERRREMEAKRAEKKTTK). 2 stretches are compositionally biased toward basic and acidic residues: residues 763 to 773 (AESRQVKAELA) and 780 to 793 (RRREMEAKRAEKKT). Residues 791–806 (KKTTKGPMKLGARKLD) form an interaction with COPB1 region.

This sequence belongs to the protein kinase superfamily. As to quaternary structure, homooligomer. Interacts with GORAB. Interacts with COPA, COPB1 and COPB2. Interacts with AP2B1. Expressed in diaphragm, quadriceps, thymus, liver, lung, spleen, kidney, heart and brain. Prominently expressed in neurons, and enriched at central nervous system synapses and neuromuscular junctions.

It localises to the cytoplasm. Its subcellular location is the cytoskeleton. The protein resides in the microtubule organizing center. It is found in the centrosome. The protein localises to the endoplasmic reticulum-Golgi intermediate compartment. It localises to the golgi apparatus. Its subcellular location is the cis-Golgi network. Regulates COPI-mediated retrograde protein traffic at the interface between the Golgi apparatus and the endoplasmic reticulum. Involved in the maintenance of the Golgi apparatus morphology. The polypeptide is N-terminal kinase-like protein (Scyl1) (Mus musculus (Mouse)).